The primary structure comprises 155 residues: Peptide deformylase (155 aa).

Residues C88 and H130 each contribute to the Fe cation site. The active site involves E131. Residue H134 participates in Fe cation binding.

Belongs to the polypeptide deformylase family. Fe(2+) is required as a cofactor.

It carries out the reaction N-terminal N-formyl-L-methionyl-[peptide] + H2O = N-terminal L-methionyl-[peptide] + formate. Functionally, removes the formyl group from the N-terminal Met of newly synthesized proteins. Requires at least a dipeptide for an efficient rate of reaction. N-terminal L-methionine is a prerequisite for activity but the enzyme has broad specificity at other positions. This chain is Peptide deformylase, found in Pelotomaculum thermopropionicum (strain DSM 13744 / JCM 10971 / SI).